The sequence spans 307 residues: Farnesol kinase, chloroplastic (307 aa).

The transit peptide at 1-65 (MATTSTTTKL…TKIRKSSLAA (65 aa)) directs the protein to the chloroplast. A run of 7 helical transmembrane segments spans residues 77–97 (VCAFGVTSIVAFSCLGFWGEI), 116–136 (IGLVFMLCWPLFSSGIQGALF), 137–157 (ASLVPGLNIVRMLLLGLGVYH), 177–194 (GPLYYVLSITSACIYYWK), 197–217 (PIAIAVICNLCAGDGMADIVG), 237–257 (IGMATAGFLASVAYMYYFASF), and 265–285 (GMILRFLVISIASALVESLPI).

The protein belongs to the polyprenol kinase family.

Its subcellular location is the plastid. It is found in the chloroplast membrane. The enzyme catalyses (2E,6E)-farnesol + CTP = (2E,6E)-farnesyl phosphate + CDP + H(+). It catalyses the reaction (2E,6E)-farnesol + ATP = (2E,6E)-farnesyl phosphate + ADP + H(+). It carries out the reaction (2E)-geraniol + ATP = (2E)-geranyl phosphate + ADP + H(+). The catalysed reaction is (2E,6E,10E)-geranylgeraniol + ATP = (2E,6E,10E)-geranylgeranyl phosphate + ADP + H(+). Functionally, kinase involved in negative regulation of abscisic acid (ABA) signaling. Substrate preference is farnesol &gt; geraniol &gt; geranylgeraniol, but has no activity with farnesyl phosphate. Can use CTP &gt; ATP &gt; GTP = UTP as phosphoryl donor. The chain is Farnesol kinase, chloroplastic from Arabidopsis thaliana (Mouse-ear cress).